The sequence spans 209 residues: MGAPNHVNFVRRRIGLTGGIATGKSTVADYLRDRYQLPILDADRYAREVVAVGSPVLQVIRDRYGASILLADGQLDRQKLGSIIFADPAERQWLEQQTHPAIRACFERDLAQLESDPIVVLVIPLLFEAGLQDWVEQIWVVACPLEQQRDRLIHRDRLTPAAAEQRLAAQWPIAQKCEHADIVIDNSRDRTFTFQQVDQAIEKVVVAEN.

The DPCK domain occupies 13-209 (RIGLTGGIAT…AIEKVVVAEN (197 aa)). Position 21 to 26 (21 to 26 (ATGKST)) interacts with ATP.

This sequence belongs to the CoaE family.

The protein resides in the cytoplasm. The enzyme catalyses 3'-dephospho-CoA + ATP = ADP + CoA + H(+). It functions in the pathway cofactor biosynthesis; coenzyme A biosynthesis; CoA from (R)-pantothenate: step 5/5. Functionally, catalyzes the phosphorylation of the 3'-hydroxyl group of dephosphocoenzyme A to form coenzyme A. The chain is Dephospho-CoA kinase from Synechococcus elongatus (strain ATCC 33912 / PCC 7942 / FACHB-805) (Anacystis nidulans R2).